Reading from the N-terminus, the 514-residue chain is MDAELVVTPPGCAHLGSFKVDNWKQNLRAIYQCFVWSGSAEARKRKAKSCVCHVCGLHLNRLHSCLHCVFFGCFTKKHIHEHAKSKRHNLAIELMYGGIYCFLCQDYIYDKDIEIIAKEEQRKAWKMQGVGEKFSTWEPTKRELELLKHNPKRRKITSNCTIGLRGLINLGNTCFMNCIVQALTHTPLLRDFFLSDRHRCEMQSPSSCLVCEMSSLFQEFYSGHRSPHIPYKLLHLVWTHARHLAGYEQQDAHEFLIAALDVLHRHCKGDDNGKKANNPNHCNCIIDQIFTGGLQSDVTCQVCHGVSTTIDPFWDISLDLPGSSTPFWPLSPGSESSVVNGESHVSGTTTLTDCLRRFTRPEHLGSSAKIKCSGCHSYQESTKQLTMKKLPIVACFHLKRFEHSAKLRRKITTYVSFPLELDMTPFMASSKESRMNGQYQQPTDSLNNDNKYSLFAVVNHQGTLESGHYTSFIRQHKDQWFKCDDAIITKASIADVLDSEGYLLFYHKQFLEYE.

A UBP-type zinc finger spans residues 10–127 (PGCAHLGSFK…KEEQRKAWKM (118 aa)). Residues Cys-12, His-14, Cys-52, Cys-55, Cys-65, Cys-68, Cys-73, His-78, His-82, His-88, Cys-101, and Cys-104 each coordinate Zn(2+). Residue Lys-118 is modified to N6-acetyllysine. Phosphothreonine is present on Thr-136. The USP domain occupies 165-509 (RGLINLGNTC…EGYLLFYHKQ (345 aa)). Cys-174 functions as the Nucleophile in the catalytic mechanism. Ser-226 carries the post-translational modification Phosphoserine. His-468 functions as the Proton acceptor in the catalytic mechanism.

It belongs to the peptidase C19 family. UBP8 subfamily. As to quaternary structure, component of some SAGA transcription coactivator-HAT complexes, at least composed of ATXN7, ATXN7L3, ENY2, GCN5L2, SUPT3H, TAF10, TRRAP and USP22. Within the SAGA complex, ATXN7L3, ENY2 and USP22 form a subcomplex required for histone deubiquitination. Interacts directly with ATXN7L3; leading to its recruitment to the SAGA complex. Interacts with ATXN7L3 and weakly with ATXN7L3B. Interacts with MED1. In terms of processing, phosphorylated in G2/M phase, but not in G1 phase by CDK1. Ubiquitinated and subsequently degraded in a CDC20-dependent manner.

It is found in the nucleus. It localises to the cytoplasm. It catalyses the reaction Thiol-dependent hydrolysis of ester, thioester, amide, peptide and isopeptide bonds formed by the C-terminal Gly of ubiquitin (a 76-residue protein attached to proteins as an intracellular targeting signal).. Functionally, deubiquitinase that plays a role in several cellular processes including transcriptional regulation, cell cycle progression or innate immunity. As part of the transcription regulatory histone acetylation (HAT) complex SAGA, catalyzes the deubiquitination of both histones H2A and H2B, thereby acting as a transcriptional coactivator. Recruited to specific gene promoters by activators such as MYC, where it is required for transcription. Facilitates cell-cycle progression by stabilizing CCNB1 and antagonizing its proteasome-mediated degradation in a cell cycle-specific manner. Modulates cell cycle progression and apoptosis also by antagonizing TP53 transcriptional activation through deacetylase SIRT1 stabilization. Plays multiple roles in immunity and inflammation. Participates in antiviral response by deubiquitinating the importin KPNA2, leading to IRF3 nuclear translocation and subsequent type I interferon production. Acts as a central regulator of type III IFN signaling by negatively regulating STING1 activation and ubiquitination. Inhibits NLRP3 inflammasome activation by promoting NLRP3 degradation through ATG5-dependent autophagy. Deubiquitinates CD274 to induce its stabilization and thereby participates in maintenance of immune tolerance to self. Controls necroptotic cell death by regulating RIPK3 phosphorylation and ubiquitination. During bacterial infection, promotes pro-inflammatory response by targeting TRAF6 and removing its 'Lys-48'-linked polyubiquitination. This Bos taurus (Bovine) protein is Ubiquitin carboxyl-terminal hydrolase 22 (USP22).